The following is a 411-amino-acid chain: Carbohydrate sulfotransferase 1 (411 aa).

Residue M1 is a topological domain, cytoplasmic. A helical; Signal-anchor for type II membrane protein membrane pass occupies residues 2-23 (QCSWKAVLLLALASIAIQYTAI). Residues 24–411 (RTFTAKSFHT…VEERDFRPFL (388 aa)) are Lumenal-facing. N56 carries an N-linked (GlcNAc...) asparagine glycan. 3'-phosphoadenylyl sulfate is bound at residue 69–75 (TRSGSSF). Residues N145 and N189 are each glycosylated (N-linked (GlcNAc...) asparagine). Position 234–242 (234–242 (RDPRGILAS)) interacts with 3'-phosphoadenylyl sulfate. Residue N334 is glycosylated (N-linked (GlcNAc...) asparagine). The Cell attachment site motif lies at 337–339 (RGD).

This sequence belongs to the sulfotransferase 1 family. Gal/GlcNAc/GalNAc subfamily.

It localises to the golgi apparatus membrane. The enzyme catalyses 3'-phosphoadenylyl sulfate + keratan = adenosine 3',5'-bisphosphate + keratan 6'-sulfate.. The protein operates within glycan metabolism. In terms of biological role, sulfotransferase that utilizes 3'-phospho-5'-adenylyl sulfate (PAPS) as sulfonate donor to catalyze the transfer of sulfate to position 6 of internal galactose (Gal) residues of keratan. Cooperates with B4GALT4 and B3GNT7 glycosyltransferases and CHST6 sulfotransferase to construct and elongate disulfated disaccharide unit [-&gt;3(6-sulfoGalbeta)1-&gt;4(6-sulfoGlcNAcbeta)1-&gt;] within keratan sulfate polymer. Has a preference for sulfating keratan sulfate, but it also transfers sulfate to the unsulfated polymer. Involved in biosynthesis of phosphacan, a major keratan sulfate proteoglycan in the developing brain. Involved in biosynthesis of 6-sulfoGalbeta-containing O-linked glycans in high endothelial venules of lymph nodes. May act in a synergistic manner with CHST4 to generate sialyl 6',6-disulfo Lewis X motif, a recognition determinant for immune cell receptors implicated in leukocyte trafficking. Catalyzes sulfation of N-acetyllactosamine (LacNAc) oligosaccharides with highest efficiency for sialylated LacNAc structures. This Rattus norvegicus (Rat) protein is Carbohydrate sulfotransferase 1 (Chst1).